The chain runs to 30 residues: Methanobactin mb-OB3b (30 aa).

Residues Met1–Ala19 constitute a propeptide that is removed on maturation. Positions Leu20–Cys21 form a cross-link, 2-(3-methylbutanoyl)-5-hydroxyoxazole-4-carbothionic acid (Leu-Cys). Cu(2+)-binding residues include Cys21 and Cys27. A disulfide bridge links Cys24 with Cys29. The proline 5-hydroxy-oxazole-4-carbothionic acid (Pro-Cys) cross-link spans Pro26 to Cys27.

In terms of assembly, monomer. In the absence of copper, may exist as a dimer or an oligomer.

It is found in the secreted. The protein resides in the cytoplasm. It carries out the reaction 2 superoxide + 2 H(+) = H2O2 + O2. Functionally, chalkophore involved in scavenging, uptake and suppression of toxicity of copper. Each apo-methanobactin (apo-mb) complexes 1 Cu(2+) or Cu(1+) ion to form Cu(1+)-mb (Cu-mb) which is then taken up by the cell. Enhances growth rate in the presence of copper and reduces growth lag upon exposition to elevated levels of copper. Cu-mb contributes to the switchover from soluble methane monooxygenase (sMMO) to the membrane-bound particulate MMO (pMMO) by inducing transcription of pMMO subunit A. It also stimulates the enzymatic activity of pMMO. In the absence of copper, binds other metal ions, like Zn(2+), Ag(1+), Au(3+), Co(2+), Cd(2+), Fe(3+), Hg(2+), Mn(2+), Ni(2+), Pb(2+) or U(6+), but not Ba(2+), Ca(2+), La(2+), Mg(2+) or Sr(2+). Uptake is an active process, which may involve TonB-dependent transporters, and as such does not involve porins. Cu-Mb can be taken up by other methanotrophic bacteria but not by E.coli. Has Cu-dependent superoxide dismutase-like activity. Shows reductant-dependent oxidase and hydrogen peroxide reductase activities. Reduces copper-levels in liver in a rat model of Wilson disease. This Methylosinus trichosporium protein is Methanobactin mb-OB3b.